Here is a 592-residue protein sequence, read N- to C-terminus: Glutamine-rich protein 2 (592 aa).

The interval 488-592 (QLQQAQHARP…TRGPRSTAAH (105 aa)) is disordered. Positions 544 to 567 (LQSNVSHSSIPTDIASLQGSQQGL) are enriched in polar residues.

Interacts with AKAP3, ODF2 and TSSK4. Interacts with AKAP4. As to expression, expressed in testis. Not detected in heart, brain, kidney, stomach, ovary, liver, lung and uterus.

It localises to the nucleus membrane. The protein localises to the nucleus. Its subcellular location is the cytoplasm. The protein resides in the cell projection. It is found in the cilium. It localises to the flagellum. Functionally, has an essential role in the formation of sperm flagella and flagellar structure maintainance. It acts as a suppressor of ubiquitination and degradation of proteins involved in flagellar development and motility. The polypeptide is Glutamine-rich protein 2 (Mus musculus (Mouse)).